Consider the following 442-residue polypeptide: GPI mannosyltransferase 1 (442 aa).

8 helical membrane passes run 22–42, 95–115, 177–197, 242–262, 307–327, 336–356, 361–381, and 408–428; these read INLT…LIVF, ILIH…IIAY, LASI…IYSI, AFTF…IFLF, MIVA…ITLV, LLLE…QYFI, ILPL…ILFA, and IWVA…KLIL.

This sequence belongs to the PIGM family.

Its subcellular location is the endoplasmic reticulum membrane. The protein operates within glycolipid biosynthesis; glycosylphosphatidylinositol-anchor biosynthesis. Functionally, mannosyltransferase involved in glycosylphosphatidylinositol-anchor biosynthesis. Transfers the first alpha-1,4-mannose to GlcN-acyl-PI during GPI precursor assembly. The protein is GPI mannosyltransferase 1 (pigm) of Dictyostelium discoideum (Social amoeba).